The sequence spans 491 residues: Probable Xaa-Pro aminopeptidase An01g13040 (491 aa).

4 residues coordinate Mn(2+): Asp276, Asp287, Glu420, and Glu459.

This sequence belongs to the peptidase M24B family. Mn(2+) serves as cofactor.

It carries out the reaction Release of any N-terminal amino acid, including proline, that is linked to proline, even from a dipeptide or tripeptide.. Functionally, catalyzes the removal of a penultimate prolyl residue from the N-termini of peptides. This Aspergillus niger (strain ATCC MYA-4892 / CBS 513.88 / FGSC A1513) protein is Probable Xaa-Pro aminopeptidase An01g13040.